The sequence spans 331 residues: D-aspartate oxidase 2 (331 aa).

FAD is bound by residues Asp-35, Lys-36, Ser-43, and Gly-307.

Belongs to the DAMOX/DASOX family. It depends on FAD as a cofactor.

Its subcellular location is the cytoplasm. It carries out the reaction D-aspartate + O2 + H2O = oxaloacetate + H2O2 + NH4(+). The catalysed reaction is D-glutamate + O2 + H2O = H2O2 + 2-oxoglutarate + NH4(+). Its function is as follows. Selectively catalyzes the oxidative deamination of acidic amino acids. May play a role in the egg-laying events and early development of the worm, in addition to quality control of the germ cells. This is D-aspartate oxidase 2 from Caenorhabditis briggsae.